Consider the following 122-residue polypeptide: Diacylglycerol kinase (122 aa).

2 residues coordinate ATP: arginine 10 and tyrosine 17. Residues arginine 10, alanine 14–tryptophan 19, and arginine 23–tryptophan 26 contribute to the substrate site. Glutamate 29 serves as a coordination point for ATP. Position 29 (glutamate 29) interacts with a divalent metal cation. Substrate is bound by residues alanine 31–glutamate 35, tryptophan 48–valine 51, arginine 56, and glutamate 70. Residues glutamate 35–threonine 55 traverse the membrane as a helical segment. The helical transmembrane segment at valine 57–glutamate 77 threads the bilayer. Glutamate 70 (proton acceptor) is an active-site residue. Residues glutamate 77, glutamate 86 to histidine 88, and lysine 95 to aspartate 96 each bind ATP. Glutamate 77 serves as a coordination point for a divalent metal cation. Residues glycine 98–tryptophan 118 form a helical membrane-spanning segment. Residues serine 99 and tryptophan 113–tryptophan 118 each bind substrate.

This sequence belongs to the bacterial diacylglycerol kinase family. Mg(2+) serves as cofactor.

It is found in the cell inner membrane. The catalysed reaction is a 1,2-diacyl-sn-glycerol + ATP = a 1,2-diacyl-sn-glycero-3-phosphate + ADP + H(+). In terms of biological role, catalyzes the ATP-dependent phosphorylation of sn-l,2-diacylglycerol (DAG) to phosphatidic acid. Involved in the recycling of diacylglycerol produced as a by-product during membrane-derived oligosaccharide (MDO) biosynthesis. The chain is Diacylglycerol kinase (dgkA) from Shigella flexneri.